The primary structure comprises 377 residues: Cyclin-I (377 aa).

Residues 357 to 377 (DLSRQEGHASPCPPLQPVSVM) form a disordered region. Pro residues predominate over residues 367–377 (PCPPLQPVSVM).

This sequence belongs to the cyclin family. In terms of tissue distribution, highest levels in adult heart, brain and skeletal muscle. Lower levels in adult placenta, lung, kidney and pancreas. Also high levels in fetal brain and lower levels in fetal lung, liver and kidney. Also abundant in testis and thyroid.

It is found in the nucleus membrane. The chain is Cyclin-I from Homo sapiens (Human).